The chain runs to 154 residues: 6,7-dimethyl-8-ribityllumazine synthase (154 aa).

5-amino-6-(D-ribitylamino)uracil is bound by residues Phe-23, 57 to 59, and 81 to 83; these read AFE and AVI. 86 to 87 serves as a coordination point for (2S)-2-hydroxy-3-oxobutyl phosphate; sequence ST. The Proton donor role is filled by His-89. A 5-amino-6-(D-ribitylamino)uracil-binding site is contributed by Phe-114. Arg-128 is a (2S)-2-hydroxy-3-oxobutyl phosphate binding site.

Belongs to the DMRL synthase family.

The catalysed reaction is (2S)-2-hydroxy-3-oxobutyl phosphate + 5-amino-6-(D-ribitylamino)uracil = 6,7-dimethyl-8-(1-D-ribityl)lumazine + phosphate + 2 H2O + H(+). It participates in cofactor biosynthesis; riboflavin biosynthesis; riboflavin from 2-hydroxy-3-oxobutyl phosphate and 5-amino-6-(D-ribitylamino)uracil: step 1/2. Catalyzes the formation of 6,7-dimethyl-8-ribityllumazine by condensation of 5-amino-6-(D-ribitylamino)uracil with 3,4-dihydroxy-2-butanone 4-phosphate. This is the penultimate step in the biosynthesis of riboflavin. The sequence is that of 6,7-dimethyl-8-ribityllumazine synthase from Campylobacter jejuni subsp. doylei (strain ATCC BAA-1458 / RM4099 / 269.97).